The following is a 920-amino-acid chain: Phosphoenolpyruvate carboxylase (920 aa).

Catalysis depends on residues histidine 138 and lysine 583.

It belongs to the PEPCase type 1 family. It depends on Mg(2+) as a cofactor.

The catalysed reaction is oxaloacetate + phosphate = phosphoenolpyruvate + hydrogencarbonate. Forms oxaloacetate, a four-carbon dicarboxylic acid source for the tricarboxylic acid cycle. The sequence is that of Phosphoenolpyruvate carboxylase from Streptococcus pyogenes serotype M3 (strain ATCC BAA-595 / MGAS315).